Here is a 308-residue protein sequence, read N- to C-terminus: 50 kDa gamma-zein (308 aa).

Residues 1–19 (MKLVLVVLAFIALVSSVSC) form the signal peptide. The segment at 27–159 (CGQQQSHEQQ…QPQQPQQYQQ (133 aa)) is disordered. The segment covering 55 to 119 (HHQQQQHQQQ…QHHQQSQGHV (65 aa)) has biased composition (low complexity). Residues 120–129 (QQHEQSHEQH) are compositionally biased toward basic and acidic residues. Over residues 130 to 159 (QGQSHEQQHQQQFQGHDKQQQPQQPQQYQQ) the composition is skewed to low complexity. Cys286 is lipidated: GPI-anchor amidated cysteine. Residues 287–308 (GLYHSYYQNNPCSSNDISGVCN) constitute a propeptide, removed in mature form.

This sequence belongs to the gliadin/glutenin family. Interacts with OP10 (via N-terminus).

The protein localises to the cell membrane. Its function is as follows. Zeins are major seed storage proteins. The sequence is that of 50 kDa gamma-zein from Zea mays (Maize).